A 257-amino-acid polypeptide reads, in one-letter code: Enterotoxin type A (257 aa).

Residues 1-24 form the signal peptide; that stretch reads MKKTAFTLLLFIALTLTTSPLVNG. Cysteines 120 and 130 form a disulfide. Zn(2+) contacts are provided by His-211, His-249, and Asp-251.

This sequence belongs to the staphylococcal/streptococcal toxin family. In terms of assembly, monomer. Interacts with MHC class II molecules alpha/HLA-DRB1 and beta/HLA-DRA chains. The interaction with MHC-II molecules occurs at both zinc-dependent and zinc-independent sites. Interacts with T-cell receptor beta variable 7-9/TRBV7-9. Requires Zn(2+) as cofactor.

Its subcellular location is the secreted. Functionally, staphylococcal enterotoxin that activates the host immune system by binding as unprocessed molecules to major histocompatibility (MHC) complex class II and T-cell receptor (TCR) molecules. In turn, waves of cellular activation, cytokine production, and migration into the lung tissue and airways occur via alphabeta T-cells. Also causes the intoxication staphylococcal food poisoning syndrome. The illness is characterized by high fever, hypotension, diarrhea, shock, and in some cases death. The protein is Enterotoxin type A (entA) of Staphylococcus aureus.